A 109-amino-acid chain; its full sequence is Protein ELF4-LIKE 3 (109 aa).

A disordered region spans residues 88 to 109; the sequence is SMEASSEGDSSEGRGNRRIRPA.

It belongs to the EARLY FLOWERING 4 family. In terms of assembly, homodimer.

It is found in the nucleus. Component of the central CCA1/LHY-TOC1 feedback loop in the circadian clock that promotes clock accuracy and is required for sustained rhythms in the absence of daily light/dark cycles. This chain is Protein ELF4-LIKE 3 (EFL3), found in Arabidopsis thaliana (Mouse-ear cress).